Consider the following 280-residue polypeptide: Putative aquaporin-10 (280 aa).

Over Met1–Tyr8 the chain is Cytoplasmic. The chain crosses the membrane as a helical span at residues Tyr9–Ala29. Topologically, residues Arg30–Gly64 are extracellular. A helical transmembrane segment spans residues Ile65–Ala85. Residues Gly86–Phe114 are Cytoplasmic-facing. Residues Leu115–Ile135 traverse the membrane as a helical segment. Over Trp136 to Gly164 the chain is Extracellular. A helical transmembrane segment spans residues Ile165–Leu185. The Cytoplasmic segment spans residues Ala186–Leu193. A helical transmembrane segment spans residues Ile194–Leu214. Residues Asn215–Ser233 lie on the Extracellular side of the membrane. Residues Phe234 to Gly254 form a helical membrane-spanning segment. Topologically, residues Gln255 to Asp280 are cytoplasmic. Residues Lys256–Asp280 are disordered. Positions Ser262–Asp280 are enriched in basic and acidic residues.

Belongs to the MIP/aquaporin (TC 1.A.8) family.

Its subcellular location is the membrane. The chain is Putative aquaporin-10 (aqp-10) from Caenorhabditis elegans.